A 272-amino-acid polypeptide reads, in one-letter code: Hydroxyethylthiazole kinase (272 aa).

Met44 lines the substrate pocket. ATP contacts are provided by Lys119 and Thr172. Gly199 lines the substrate pocket.

Belongs to the Thz kinase family. It depends on Mg(2+) as a cofactor.

The enzyme catalyses 5-(2-hydroxyethyl)-4-methylthiazole + ATP = 4-methyl-5-(2-phosphooxyethyl)-thiazole + ADP + H(+). Its pathway is cofactor biosynthesis; thiamine diphosphate biosynthesis; 4-methyl-5-(2-phosphoethyl)-thiazole from 5-(2-hydroxyethyl)-4-methylthiazole: step 1/1. Catalyzes the phosphorylation of the hydroxyl group of 4-methyl-5-beta-hydroxyethylthiazole (THZ). This is Hydroxyethylthiazole kinase from Enterococcus faecalis (strain ATCC 700802 / V583).